Here is a 100-residue protein sequence, read N- to C-terminus: Urease subunit gamma (100 aa).

The protein belongs to the urease gamma subunit family. Heterotrimer of UreA (gamma), UreB (beta) and UreC (alpha) subunits. Three heterotrimers associate to form the active enzyme.

The protein localises to the cytoplasm. It carries out the reaction urea + 2 H2O + H(+) = hydrogencarbonate + 2 NH4(+). It functions in the pathway nitrogen metabolism; urea degradation; CO(2) and NH(3) from urea (urease route): step 1/1. The protein is Urease subunit gamma of Parasynechococcus marenigrum (strain WH8102).